The primary structure comprises 158 residues: NAD(P)H-quinone oxidoreductase subunit J, chloroplastic (158 aa).

The protein belongs to the complex I 30 kDa subunit family. As to quaternary structure, NDH is composed of at least 16 different subunits, 5 of which are encoded in the nucleus.

Its subcellular location is the plastid. It localises to the chloroplast thylakoid membrane. It catalyses the reaction a plastoquinone + NADH + (n+1) H(+)(in) = a plastoquinol + NAD(+) + n H(+)(out). The catalysed reaction is a plastoquinone + NADPH + (n+1) H(+)(in) = a plastoquinol + NADP(+) + n H(+)(out). Functionally, NDH shuttles electrons from NAD(P)H:plastoquinone, via FMN and iron-sulfur (Fe-S) centers, to quinones in the photosynthetic chain and possibly in a chloroplast respiratory chain. The immediate electron acceptor for the enzyme in this species is believed to be plastoquinone. Couples the redox reaction to proton translocation, and thus conserves the redox energy in a proton gradient. This chain is NAD(P)H-quinone oxidoreductase subunit J, chloroplastic, found in Cucumis sativus (Cucumber).